The primary structure comprises 126 residues: Ribosome-binding factor A (126 aa).

This sequence belongs to the RbfA family. Monomer. Binds 30S ribosomal subunits, but not 50S ribosomal subunits or 70S ribosomes.

The protein resides in the cytoplasm. In terms of biological role, one of several proteins that assist in the late maturation steps of the functional core of the 30S ribosomal subunit. Associates with free 30S ribosomal subunits (but not with 30S subunits that are part of 70S ribosomes or polysomes). Required for efficient processing of 16S rRNA. May interact with the 5'-terminal helix region of 16S rRNA. The chain is Ribosome-binding factor A from Treponema pallidum (strain Nichols).